The primary structure comprises 1357 residues: Vascular endothelial growth factor receptor 2 (1357 aa).

A signal peptide spans 1-22 (MAKTSYALLLLDILLTFNVAKA). Topologically, residues 23–774 (IELRFVPDPP…GAEEKMNVEL (752 aa)) are extracellular. Ig-like C2-type domains lie at 32–120 (PTLN…SVAV), 120–222 (VYVF…VAVV), 216–330 (PYIV…ASLI), 335–426 (PFIA…RTFQ), 433–553 (PRIF…VIVF), 556–667 (TRFL…LLHN), and 676–762 (SRIV…ARIS). N-linked (GlcNAc...) asparagine glycosylation is found at Asn35, Asn44, Asn66, Asn97, Asn161, Asn209, Asn247, Asn272, Asn303, Asn307, Asn407, Asn501, Asn560, Asn621, Asn631, Asn640, Asn681, Asn688, and Asn713. Disulfide bonds link Cys53-Cys104 and Cys153-Cys203. Cys248 and Cys314 are joined by a disulfide. A disulfide bridge links Cys457 with Cys538. A disulfide bridge connects residues Cys579 and Cys651. A disulfide bond links Cys697 and Cys746. A helical membrane pass occupies residues 775 to 795 (IMPIGAVVIAMFLWLLIVFVI). At 796–1357 (RNRKRPNDGD…AEVRYSAPPV (562 aa)) the chain is on the cytoplasmic side. Residues 843-1173 (LKLGEPLGRG…FTQLVEHLGN (331 aa)) enclose the Protein kinase domain. ATP-binding positions include 849–857 (LGRGAFGQV) and Lys877. Residues 944 to 975 (YSPYKKRTPRMPNRREVQQDEDPREGDLGLGT) form a disordered region. The Proton acceptor role is filled by Asp1039. Residues Tyr1065, Tyr1070, Tyr1186, and Tyr1222 each carry the phosphotyrosine; by autocatalysis modification. Positions 1296 to 1357 (SLASESSNQT…AEVRYSAPPV (62 aa)) are disordered. The segment covering 1298 to 1312 (ASESSNQTSGYQSGY) has biased composition (polar residues).

The protein belongs to the protein kinase superfamily. Tyr protein kinase family. CSF-1/PDGF receptor subfamily. Interacts with isoform VEGF165 of vegfaa and, to a lesser extent, with isoform VEGF171 of vegfab. Interacts (via juxtamembrane region) with chaperone pdcl3 (via thioredoxin fold region); the interaction leads to increased vegfr2 abundance through inhibition of its ubiquitination and degradation. First expressed in embryos between 5- and 7-somites in the bilateral stripes that contain the developing angioblasts, and then localized to the intermediate cell mass (ICM) and the developing vasculature. By 30 hpf, expressed in the major trunk, head and intersomitic vessels, persisting through 4 dpf when expression is seen in developing subintestinal veins and in the remaining vasculature.

It is found in the cell membrane. It localises to the cytoplasm. Its subcellular location is the nucleus. The protein resides in the cytoplasmic vesicle. The protein localises to the early endosome. It is found in the cell junction. It localises to the endoplasmic reticulum. It catalyses the reaction L-tyrosyl-[protein] + ATP = O-phospho-L-tyrosyl-[protein] + ADP + H(+). Functionally, receptor for VEGF or VEGFC. Has a tyrosine-protein kinase activity. Combinations of multiple VEGF receptors are required for development of different blood vessel types in the embryo. Involved in angiogenesis, specifically in VEGF-induced sprouting of new blood vessels. Particularly involved in artery formation. Does not appear to be required for hematopoiesis. The protein is Vascular endothelial growth factor receptor 2 of Danio rerio (Zebrafish).